A 503-amino-acid polypeptide reads, in one-letter code: Aromatase 2 (503 aa).

Residue Cys-437 coordinates heme.

It belongs to the cytochrome P450 family. Requires heme as cofactor.

The protein resides in the membrane. The enzyme catalyses testosterone + 3 reduced [NADPH--hemoprotein reductase] + 3 O2 = 17beta-estradiol + formate + 3 oxidized [NADPH--hemoprotein reductase] + 4 H2O + 4 H(+). The catalysed reaction is androst-4-ene-3,17-dione + 3 reduced [NADPH--hemoprotein reductase] + 3 O2 = estrone + formate + 3 oxidized [NADPH--hemoprotein reductase] + 4 H2O + 4 H(+). Catalyzes the formation of aromatic C18 estrogens from C19 androgens. This Sus scrofa (Pig) protein is Aromatase 2 (CYP19A2).